The primary structure comprises 245 residues: 3-deoxy-manno-octulosonate cytidylyltransferase (245 aa).

It belongs to the KdsB family.

It is found in the cytoplasm. The catalysed reaction is 3-deoxy-alpha-D-manno-oct-2-ulosonate + CTP = CMP-3-deoxy-beta-D-manno-octulosonate + diphosphate. Its pathway is nucleotide-sugar biosynthesis; CMP-3-deoxy-D-manno-octulosonate biosynthesis; CMP-3-deoxy-D-manno-octulosonate from 3-deoxy-D-manno-octulosonate and CTP: step 1/1. It functions in the pathway bacterial outer membrane biogenesis; lipopolysaccharide biosynthesis. Activates KDO (a required 8-carbon sugar) for incorporation into bacterial lipopolysaccharide in Gram-negative bacteria. This Acidobacterium capsulatum (strain ATCC 51196 / DSM 11244 / BCRC 80197 / JCM 7670 / NBRC 15755 / NCIMB 13165 / 161) protein is 3-deoxy-manno-octulosonate cytidylyltransferase.